Reading from the N-terminus, the 477-residue chain is POC1 centriolar protein homolog B (477 aa).

WD repeat units follow at residues 16-55, 58-97, 100-139, 142-181, 183-223, 226-265, and 268-307; these read GHKA…RAYR, GHKD…KSSE, AHTA…FLYS, RHTH…CVNN, SDSV…LLQH, VHSC…LIYT, and GHTG…VHYR. A coiled-coil region spans residues 449 to 469; sequence EQRLSLTEDKLKDCLENQQKL.

This sequence belongs to the WD repeat POC1 family. Interacts with POC1A. Interacts with FAM161A. Interacts with CEP44; the interaction is direct and recruits POC1B to centriolar microtubules. Forms a microtubule-associated complex with POC5, CETN2 and FAM161A. Interacts with CCDC15. Phosphorylated in mitotic cells that may be mediated by CDK1.

Its subcellular location is the cytoplasm. It is found in the cytoskeleton. The protein localises to the microtubule organizing center. The protein resides in the centrosome. It localises to the centriole. Its subcellular location is the cilium basal body. It is found in the spindle pole. Functionally, plays an important role in centriole assembly and/or stability and ciliogenesis. Involved in early steps of centriole duplication, as well as in the later steps of centriole length control. Acts in concert with POC1A to ensure centriole integrity and proper mitotic spindle formation. Required for primary cilia formation, ciliary length and also cell proliferation. Required for retinal integrity. Acts as a positive regulator of centriole elongation. The sequence is that of POC1 centriolar protein homolog B (Poc1b) from Rattus norvegicus (Rat).